The following is a 953-amino-acid chain: Glycine dehydrogenase (decarboxylating) (953 aa).

Lys-705 is subject to N6-(pyridoxal phosphate)lysine.

This sequence belongs to the GcvP family. As to quaternary structure, the glycine cleavage system is composed of four proteins: P, T, L and H. It depends on pyridoxal 5'-phosphate as a cofactor.

It carries out the reaction N(6)-[(R)-lipoyl]-L-lysyl-[glycine-cleavage complex H protein] + glycine + H(+) = N(6)-[(R)-S(8)-aminomethyldihydrolipoyl]-L-lysyl-[glycine-cleavage complex H protein] + CO2. The glycine cleavage system catalyzes the degradation of glycine. The P protein binds the alpha-amino group of glycine through its pyridoxal phosphate cofactor; CO(2) is released and the remaining methylamine moiety is then transferred to the lipoamide cofactor of the H protein. The sequence is that of Glycine dehydrogenase (decarboxylating) from Sodalis glossinidius (strain morsitans).